The sequence spans 218 residues: Adenylate kinase (218 aa).

10–15 (GAGKGT) contacts ATP. The tract at residues 30–59 (STGDMLRAAVKEGSELGLKVKEIMNSGGLV) is NMP. Residues Thr31, Arg36, 57 to 59 (GLV), 85 to 88 (GFPR), and Gln92 each bind AMP. The LID stretch occupies residues 122 to 159 (GRRVHPGSGRVYHVDYNPPKEEGKDDVTGEALIQRDDD). Residues Arg123 and 132–133 (VY) each bind ATP. Residues Arg156 and Arg167 each contribute to the AMP site. ATP is bound at residue Gly203.

The protein belongs to the adenylate kinase family. Monomer.

The protein localises to the cytoplasm. It catalyses the reaction AMP + ATP = 2 ADP. Its pathway is purine metabolism; AMP biosynthesis via salvage pathway; AMP from ADP: step 1/1. Functionally, catalyzes the reversible transfer of the terminal phosphate group between ATP and AMP. Plays an important role in cellular energy homeostasis and in adenine nucleotide metabolism. In Chromohalobacter salexigens (strain ATCC BAA-138 / DSM 3043 / CIP 106854 / NCIMB 13768 / 1H11), this protein is Adenylate kinase.